A 112-amino-acid chain; its full sequence is Large ribosomal subunit protein eL30 (112 aa).

Belongs to the eukaryotic ribosomal protein eL30 family.

This Zea mays (Maize) protein is Large ribosomal subunit protein eL30 (RPL30).